The primary structure comprises 521 residues: MTEFTNRLQKVASNPKAFKNTGRGIERETLRFTLDAALSSKPHPAGVGSALTHKYITTDFAESLLEFITPVSHDVKTVLKQLEDVHHYTVSHMGEEKLWPLSMPCFVSKDDDITLAQYGKSNVGQLKTTYREGLKRRYGSVMQVISGVHFNFSFSNEFWDELLGEQTEKDRQDSVSDAYFGLIRNYYRFGWLIPYFFGASPALCGSFIQGRETTMNFESLGKTLYLPYATSLRLSDLGYTNDAQSDLKISLNSIDEYIEGLNKAIRTPSEEFAKIGLKEGDKHIQLNANVLQIENELYAPIRPKRVAKSGEKPSEALERSGIEYIEVRSLDVNPFSPIGVDEDQVRFLDLFLTWSVLTDSAPMDDSEMACWKDNWNKIVELGRKPGLELQIGCQGERLTQKAWAERVFDDLFTIAKKMDAVNGDDAYQQTHQRLSAMIENPELTISGRLLAETKKAGGIGIIGCKLAIQHRQAHLDHKYSFYTKDELDAEVERSVLAQKEIEASDTMPFSEYLDDYFNYLK.

It belongs to the glutamate--cysteine ligase type 1 family. Type 1 subfamily.

The enzyme catalyses L-cysteine + L-glutamate + ATP = gamma-L-glutamyl-L-cysteine + ADP + phosphate + H(+). It participates in sulfur metabolism; glutathione biosynthesis; glutathione from L-cysteine and L-glutamate: step 1/2. This chain is Glutamate--cysteine ligase, found in Aliivibrio salmonicida (strain LFI1238) (Vibrio salmonicida (strain LFI1238)).